Consider the following 20-residue polypeptide: Non-specific lipid-transfer protein (20 aa).

This sequence belongs to the plant LTP family.

Its function is as follows. Plant non-specific lipid-transfer proteins transfer phospholipids as well as galactolipids across membranes. May play a role in wax or cutin deposition in the cell walls of expanding epidermal cells and certain secretory tissues. The chain is Non-specific lipid-transfer protein from Citrus limon (Lemon).